An 859-amino-acid chain; its full sequence is Heterogeneous nuclear ribonucleoprotein U-like protein 1 (859 aa).

The necessary for interaction with HRMT1L1 stretch occupies residues 1–103; that stretch reads MDVRRLKVNE…GPDGHYVMDN (103 aa). The region spanning 3–37 is the SAP domain; sequence VRRLKVNELREELQRRGLDTRGLKAELAERLLAAL. Residues 36 to 131 form a disordered region; the sequence is ALEAEEPEDE…SSYDRRPLDM (96 aa). Over residues 38 to 54 the composition is skewed to acidic residues; it reads EAEEPEDERELEADDDP. The span at 77-88 shows a compositional bias: pro residues; sequence QPPPPGLQPHPE. Residue Lys-117 forms a Glycyl lysine isopeptide (Lys-Gly) (interchain with G-Cter in SUMO1); alternate linkage. Residue Lys-117 forms a Glycyl lysine isopeptide (Lys-Gly) (interchain with G-Cter in SUMO2); alternate linkage. Residues 118–130 show a composition bias toward basic and acidic residues; sequence QENESSYDRRPLD. Lys-143 is covalently cross-linked (Glycyl lysine isopeptide (Lys-Gly) (interchain with G-Cter in SUMO1); alternate). A Glycyl lysine isopeptide (Lys-Gly) (interchain with G-Cter in SUMO2); alternate cross-link involves residue Lys-143. Residues 146 to 206 are disordered; that stretch reads MKQEAPPSFL…QPPAEEDEDD (61 aa). Glycyl lysine isopeptide (Lys-Gly) (interchain with G-Cter in SUMO2) cross-links involve residues Lys-147 and Lys-163. Residues 174 to 193 show a composition bias toward basic and acidic residues; it reads RPFEENRGRGYFEHREDRRG. In terms of domain architecture, B30.2/SPRY spans 192–389; sequence RGRSPQPPAE…VEFNFGQRAE (198 aa). Phosphoserine is present on Ser-195. Phosphothreonine is present on Thr-210. The necessary for interaction with TP53 stretch occupies residues 214 to 859; the sequence is IDTYNCDLHF…GSTQGGTSTQ (646 aa). Residues Lys-271 and Lys-450 each participate in a glycyl lysine isopeptide (Lys-Gly) (interchain with G-Cter in SUMO2) cross-link. Residues 457 to 595 form a necessary for interaction with BRD7 and transcriptional activation region; the sequence is NAIMDKMRVM…EEADKLVRQY (139 aa). Residue Ser-513 is modified to Phosphoserine. Lys-540 participates in a covalent cross-link: Glycyl lysine isopeptide (Lys-Gly) (interchain with G-Cter in SUMO2). The segment covering 595-612 has biased composition (basic and acidic residues); the sequence is YNEEGRKAGPPPEKRFDS. The segment at 595–814 is disordered; that stretch reads YNEEGRKAGP…PPTAQTYPQP (220 aa). A run of 5 repeats spans residues 613–615, 620–622, 639–641, 645–647, and 659–661. Gly residues-rich tracts occupy residues 613–626 and 634–670; these read RGGG…GGGF and PPGG…GGGY. The tract at residues 613 to 661 is 5 X 3 AA repeats of R-G-G; it reads RGGGFRGRGGGGGFQRYDNRGPPGGNRGGFQNRGGGGGSGGGGGNYRGG. The necessary for transcription repression stretch occupies residues 613–661; the sequence is RGGGFRGRGGGGGFQRYDNRGPPGGNRGGFQNRGGGGGSGGGGGNYRGG. Residue Arg-639 is modified to Asymmetric dimethylarginine. Residues Arg-645 and Arg-659 each carry the asymmetric dimethylarginine; alternate modification. Omega-N-methylarginine; alternate occurs at positions 645 and 659. Omega-N-methylarginine occurs at positions 664 and 674. Residues 671–696 are compositionally biased toward low complexity; sequence NQNRWGNNNRDNNNSNNRGNYNRAPQ. Pro residues predominate over residues 697-720; it reads QQPPPQQPPPPQPPPQQPPPPPSY. Residue Ser-721 is modified to Phosphoserine. Positions 728 to 744 are enriched in polar residues; it reads GASSYNKNSNIPGSSAN. Residues 745–775 are compositionally biased toward low complexity; it reads TSTPTVSSYTPPQPSYSQPPYNQGGYTQGYT. Composition is skewed to pro residues over residues 776-786 and 796-807; these read APPPPPPPPPA and NPAPYTPPPPPT.

Interacts with BRD7, PRMT2, TP53 and NXF1. Associates with histones and BRD7. Methylated.

It is found in the nucleus. Functionally, acts as a basic transcriptional regulator. Represses basic transcription driven by several virus and cellular promoters. When associated with BRD7, activates transcription of glucocorticoid-responsive promoter in the absence of ligand-stimulation. Also plays a role in mRNA processing and transport. Binds avidly to poly(G) and poly(C) RNA homopolymers in vitro. The protein is Heterogeneous nuclear ribonucleoprotein U-like protein 1 (Hnrnpul1) of Mus musculus (Mouse).